We begin with the raw amino-acid sequence, 728 residues long: 1,4-alpha-glucan branching enzyme GlgB (728 aa).

Catalysis depends on D409, which acts as the Nucleophile. The active-site Proton donor is the E462.

It belongs to the glycosyl hydrolase 13 family. GlgB subfamily. As to quaternary structure, monomer.

It carries out the reaction Transfers a segment of a (1-&gt;4)-alpha-D-glucan chain to a primary hydroxy group in a similar glucan chain.. The protein operates within glycan biosynthesis; glycogen biosynthesis. Functionally, catalyzes the formation of the alpha-1,6-glucosidic linkages in glycogen by scission of a 1,4-alpha-linked oligosaccharide from growing alpha-1,4-glucan chains and the subsequent attachment of the oligosaccharide to the alpha-1,6 position. The sequence is that of 1,4-alpha-glucan branching enzyme GlgB from Cereibacter sphaeroides (strain ATCC 17023 / DSM 158 / JCM 6121 / CCUG 31486 / LMG 2827 / NBRC 12203 / NCIMB 8253 / ATH 2.4.1.) (Rhodobacter sphaeroides).